A 322-amino-acid chain; its full sequence is Ribose-phosphate pyrophosphokinase (322 aa).

Residues 43 to 45 (DGE) and 102 to 103 (RQ) each bind ATP. Positions 137 and 177 each coordinate Mg(2+). K201 is an active-site residue. Residues R203, D227, and 231-235 (DTAGT) contribute to the D-ribose 5-phosphate site.

This sequence belongs to the ribose-phosphate pyrophosphokinase family. Class I subfamily. As to quaternary structure, homohexamer. It depends on Mg(2+) as a cofactor.

It is found in the cytoplasm. It carries out the reaction D-ribose 5-phosphate + ATP = 5-phospho-alpha-D-ribose 1-diphosphate + AMP + H(+). Its pathway is metabolic intermediate biosynthesis; 5-phospho-alpha-D-ribose 1-diphosphate biosynthesis; 5-phospho-alpha-D-ribose 1-diphosphate from D-ribose 5-phosphate (route I): step 1/1. Its function is as follows. Involved in the biosynthesis of the central metabolite phospho-alpha-D-ribosyl-1-pyrophosphate (PRPP) via the transfer of pyrophosphoryl group from ATP to 1-hydroxyl of ribose-5-phosphate (Rib-5-P). The sequence is that of Ribose-phosphate pyrophosphokinase from Xylella fastidiosa (strain Temecula1 / ATCC 700964).